Here is a 140-residue protein sequence, read N- to C-terminus: Cystatin-C (140 aa).

Positions 1-20 are cleaved as a signal peptide; the sequence is MASPLRSLMLLLAVLAVAWA. A Secondary area of contact motif is present at residues 75–79; the sequence is QLVAG. 2 disulfide bridges follow: C93–C103 and C117–C137. An N-linked (GlcNAc...) asparagine glycan is attached at N99.

The protein belongs to the cystatin family.

Its subcellular location is the secreted. As an inhibitor of cysteine proteinases, this protein is thought to serve an important physiological role as a local regulator of this enzyme activity. Known to inhibit cathepsin B, H, and L. The protein is Cystatin-C (Cst3) of Rattus norvegicus (Rat).